The primary structure comprises 374 residues: Glutamate 5-kinase (374 aa).

Lysine 9 is a binding site for ATP. Residues serine 49, aspartate 136, and asparagine 148 each coordinate substrate. ATP contacts are provided by residues 168 to 169 (TD) and 210 to 216 (TGGMRSK). Positions 276–354 (AGMITVDSGA…EEARQYSYLH (79 aa)) constitute a PUA domain.

It belongs to the glutamate 5-kinase family.

It localises to the cytoplasm. It carries out the reaction L-glutamate + ATP = L-glutamyl 5-phosphate + ADP. It functions in the pathway amino-acid biosynthesis; L-proline biosynthesis; L-glutamate 5-semialdehyde from L-glutamate: step 1/2. In terms of biological role, catalyzes the transfer of a phosphate group to glutamate to form L-glutamate 5-phosphate. In Geobacillus kaustophilus (strain HTA426), this protein is Glutamate 5-kinase.